The primary structure comprises 343 residues: DNA polymerase III subunit delta (343 aa).

Domain stretches follow at residues 1–140, 141–210, and 211–343; these read MIRL…VTCQ, TPEQ…NDAA, and HFTP…FIDG.

The protein belongs to the DNA polymerase HolA subunit family. In terms of assembly, the DNA polymerase III holoenzyme complex contains at least 10 different subunits organized into 3 functionally essential subassemblies: the Pol III core, the beta sliding clamp processivity factor and the clamp-loading complex. The Pol III core (subunits alpha, epsilon and theta) contains the polymerase and the 3'-5' exonuclease proofreading activities. The polymerase is tethered to the template via the dimeric beta sliding clamp processivity factor. The clamp-loading complex (also called gamma complex) assembles the beta sliding clamp onto the primed template and plays a central role in the organization and communication at the replication fork. The clamp-loading complex contains delta, delta', psi and chi, and 3 copies of either or both of two different DnaX proteins, gamma and tau. The DNA replisome complex has a single clamp loader (3 tau and 1 each of delta, delta', psi and chi subunits) which binds 3 Pol III cores (1 core on the leading strand and 2 on the lagging strand) each with a beta sliding clamp dimer. Additional proteins in the replisome are other copies of gamma, psi and chi, Ssb, DNA helicase and RNA primase. The clamp loader hydrolyzes ATP to assemble the beta processivity factor onto the primed template and plays a central role in the organization and communication at the replication fork; the minimal complex to load the beta sliding clamp on DNA is delta, delta', gamma.

It carries out the reaction DNA(n) + a 2'-deoxyribonucleoside 5'-triphosphate = DNA(n+1) + diphosphate. In terms of biological role, part of the beta sliding clamp loading complex, which hydrolyzes ATP to load the beta clamp onto primed DNA to form the DNA replication pre-initiation complex. DNA polymerase III is a complex, multichain enzyme responsible for most of the replicative synthesis in bacteria. This DNA polymerase also exhibits 3'-5' exonuclease activity. The delta subunit is the wrench that will open the beta subunit dimer, which has been modeled to leave a gap large enough for ssDNA to pass through. The gamma complex (gamma(3),delta,delta') is thought to load beta dimers onto DNA by binding ATP which alters the complex's conformation so it can bind beta sliding clamp dimers and open them at one interface. Primed DNA is recognized, ATP is hydrolyzed releasing the gamma complex and closing the beta sliding clamp ring around the primed DNA. In Escherichia coli (strain K12), this protein is DNA polymerase III subunit delta (holA).